Consider the following 322-residue polypeptide: Transcription factor IIIA (322 aa).

9 consecutive C2H2-type zinc fingers follow at residues 12–36, 42–64, 70–95, 102–126, 132–156, 159–184, 188–211, 218–243, and 249–273; these read FVCS…YCKH, FACD…NLSH, YQCL…ERVH, YVCD…KCEH, FECQ…EKVH, YPCA…KAAH, LQCD…LFVH, FKCT…LSFH, and FICP…AVVH. Residues 272 to 322 are disordered; the sequence is VHDPQKKKLQKKTKRGRKKKLEPKTNVSDDSELPAQLHGLSLNTSTSQNNP. Residues 278–292 show a composition bias toward basic residues; sequence KKLQKKTKRGRKKKL. The segment covering 312 to 322 has biased composition (polar residues); that stretch reads SLNTSTSQNNP.

The protein localises to the nucleus. Involved in ribosomal large subunit biogenesis. Interacts with the internal control region (ICR) of approximately 50 bases within the 5S RNA genes, is required for correct transcription of these genes by RNA polymerase III. Also binds the transcribed 5S RNA's. The chain is Transcription factor IIIA (gtf3a) from Ictalurus punctatus (Channel catfish).